A 68-amino-acid chain; its full sequence is Large ribosomal subunit protein uL29 (68 aa).

This sequence belongs to the universal ribosomal protein uL29 family.

This Chloroflexus aurantiacus (strain ATCC 29364 / DSM 637 / Y-400-fl) protein is Large ribosomal subunit protein uL29.